A 177-amino-acid polypeptide reads, in one-letter code: Large ribosomal subunit protein uL6 (177 aa).

This sequence belongs to the universal ribosomal protein uL6 family. Part of the 50S ribosomal subunit.

This protein binds to the 23S rRNA, and is important in its secondary structure. It is located near the subunit interface in the base of the L7/L12 stalk, and near the tRNA binding site of the peptidyltransferase center. The chain is Large ribosomal subunit protein uL6 from Zymomonas mobilis subsp. mobilis (strain ATCC 31821 / ZM4 / CP4).